Here is a 618-residue protein sequence, read N- to C-terminus: Beta-glucosidase C (618 aa).

An N-terminal signal peptide occupies residues 1-19; sequence MRVDSTVLALVALATDCLG. 5 N-linked (GlcNAc...) asparagine glycosylation sites follow: Asn40, Asn82, Asn104, Asn211, and Asn263. The active site involves Asp330. N-linked (GlcNAc...) asparagine glycans are attached at residues Asn417, Asn448, Asn477, Asn482, Asn502, and Asn517.

Belongs to the glycosyl hydrolase 3 family.

The protein resides in the secreted. It carries out the reaction Hydrolysis of terminal, non-reducing beta-D-glucosyl residues with release of beta-D-glucose.. The protein operates within glycan metabolism; cellulose degradation. Functionally, beta-glucosidases are one of a number of cellulolytic enzymes involved in the degradation of cellulosic biomass. Catalyzes the last step releasing glucose from the inhibitory cellobiose. This Emericella nidulans (strain FGSC A4 / ATCC 38163 / CBS 112.46 / NRRL 194 / M139) (Aspergillus nidulans) protein is Beta-glucosidase C (bglC).